Here is a 207-residue protein sequence, read N- to C-terminus: Flavin-dependent thymidylate synthase (207 aa).

The region spanning 1 to 204 is the ThyX domain; sequence MQITLLFHTP…KFIFEHCLHK (204 aa). FAD-binding positions include serine 50 and 74–76; that span reads RHR. Residues 71–74, 84–86, and lysine 143 each bind dUMP; these read EVAR and STR. The ThyX motif motif lies at 74-84; the sequence is RHRHTSPSVKS. FAD is bound by residues 159–161 and asparagine 165; that span reads NAR. DUMP is bound at residue arginine 170. Arginine 170 serves as the catalytic Involved in ionization of N3 of dUMP, leading to its activation.

The protein belongs to the thymidylate synthase ThyX family. As to quaternary structure, homotetramer. Requires FAD as cofactor.

The enzyme catalyses dUMP + (6R)-5,10-methylene-5,6,7,8-tetrahydrofolate + NADPH + H(+) = dTMP + (6S)-5,6,7,8-tetrahydrofolate + NADP(+). Its pathway is pyrimidine metabolism; dTTP biosynthesis. Functionally, catalyzes the reductive methylation of 2'-deoxyuridine-5'-monophosphate (dUMP) to 2'-deoxythymidine-5'-monophosphate (dTMP) while utilizing 5,10-methylenetetrahydrofolate (mTHF) as the methyl donor, and NADPH and FADH(2) as the reductant. The sequence is that of Flavin-dependent thymidylate synthase from Campylobacter jejuni subsp. jejuni serotype O:2 (strain ATCC 700819 / NCTC 11168).